The chain runs to 252 residues: 5'-nucleotidase SurE (252 aa).

D8, D9, S39, and N91 together coordinate a divalent metal cation.

It belongs to the SurE nucleotidase family. A divalent metal cation serves as cofactor.

The protein resides in the cytoplasm. The catalysed reaction is a ribonucleoside 5'-phosphate + H2O = a ribonucleoside + phosphate. Nucleotidase that shows phosphatase activity on nucleoside 5'-monophosphates. The protein is 5'-nucleotidase SurE of Legionella pneumophila (strain Lens).